The chain runs to 103 residues: Putative RNA-binding protein RbpB (103 aa).

The RRM domain occupies 2–79 (SIYVGNLSYD…RDLKVNKAKP (78 aa)). Over residues 74-85 (VNKAKPREDRGG) the composition is skewed to basic and acidic residues. The segment at 74–103 (VNKAKPREDRGGSRGSFGGNRSNNNFRNRY) is disordered. Residues 92–103 (GNRSNNNFRNRY) are compositionally biased toward low complexity.

This chain is Putative RNA-binding protein RbpB (rbpB), found in Nostoc sp. (strain PCC 7120 / SAG 25.82 / UTEX 2576).